Consider the following 445-residue polypeptide: Putative ubiquitin carboxyl-terminal hydrolase L293 (445 aa).

Residues 133–441 (KALANFGNSC…SAYIILYGDI (309 aa)) enclose the USP domain. The Nucleophile role is filled by cysteine 142. The active-site Proton acceptor is histidine 384.

Belongs to the peptidase C19 family.

It localises to the virion. It catalyses the reaction Thiol-dependent hydrolysis of ester, thioester, amide, peptide and isopeptide bonds formed by the C-terminal Gly of ubiquitin (a 76-residue protein attached to proteins as an intracellular targeting signal).. In Acanthamoeba polyphaga mimivirus (APMV), this protein is Putative ubiquitin carboxyl-terminal hydrolase L293.